We begin with the raw amino-acid sequence, 82 residues long: UPF0213 protein SH2523 (82 aa).

A GIY-YIG domain is found at A2 to K77.

This sequence belongs to the UPF0213 family.

The sequence is that of UPF0213 protein SH2523 from Staphylococcus haemolyticus (strain JCSC1435).